We begin with the raw amino-acid sequence, 328 residues long: AA9 family lytic polysaccharide monooxygenase A (328 aa).

The first 21 residues, 1-21 (MPSTKVAALSAVLALASTVAG), serve as a signal peptide directing secretion. Cu(2+) is bound at residue His-22. His-22 carries the post-translational modification Methylhistidine. Disulfide bonds link Cys-77/Cys-199 and Cys-118/Cys-122. N-linked (GlcNAc...) asparagine glycosylation is present at Asn-80. His-107 contacts Cu(2+). N-linked (GlcNAc...) asparagine glycans are attached at residues Asn-121 and Asn-159. Residues His-185 and Gln-194 each contribute to the O2 site. Tyr-196 provides a ligand contact to Cu(2+). Residues Ser-235 and Ser-237 are each glycosylated (O-linked (Man...) serine). O-linked (Man...) threonine glycosylation is found at Thr-238 and Thr-245.

It belongs to the polysaccharide monooxygenase AA9 family. Cu(2+) is required as a cofactor. The catalytically essential N-terminal histidine His-22 is post-translationally modified by methylation to prevent protonation of the histidine side chain, and protect the critical active site of the enzyme from oxidative damage.

Its subcellular location is the secreted. The enzyme catalyses [(1-&gt;4)-beta-D-glucosyl]n+m + reduced acceptor + O2 = 4-dehydro-beta-D-glucosyl-[(1-&gt;4)-beta-D-glucosyl]n-1 + [(1-&gt;4)-beta-D-glucosyl]m + acceptor + H2O.. Lytic polysaccharide monooxygenase (LPMO) that depolymerizes crystalline and amorphous polysaccharides via the oxidation of scissile alpha- or beta-(1-4)-glycosidic bonds, yielding C1 and C4 oxidation products. Catalysis by LPMOs requires the reduction of the active-site copper from Cu(II) to Cu(I) by a reducing agent and H(2)O(2) or O(2) as a cosubstrate. Shows activity on cellulosic substrates (Avicel, carboxymethylcellulose) and xylan. This is AA9 family lytic polysaccharide monooxygenase A from Talaromyces verruculosus (Penicillium verruculosum).